Reading from the N-terminus, the 393-residue chain is Phosphoglycerate kinase (393 aa).

Substrate-binding positions include 22 to 24 (DFN), arginine 37, 60 to 63 (HLGR), arginine 119, and arginine 152. Residues lysine 202, glycine 293, glutamate 324, and 350-353 (GGDS) each bind ATP.

It belongs to the phosphoglycerate kinase family. Monomer.

It localises to the cytoplasm. The catalysed reaction is (2R)-3-phosphoglycerate + ATP = (2R)-3-phospho-glyceroyl phosphate + ADP. Its pathway is carbohydrate degradation; glycolysis; pyruvate from D-glyceraldehyde 3-phosphate: step 2/5. The protein is Phosphoglycerate kinase of Borreliella afzelii (strain PKo) (Borrelia afzelii).